The following is a 176-amino-acid chain: Ferritin heavy chain B (176 aa).

Residues 7 to 156 form the Ferritin-like diiron domain; it reads QNFNSDCEAA…DYITNLKRLG (150 aa). Fe cation is bound by residues Glu-24, Glu-59, His-62, Glu-104, and Gln-138.

Belongs to the ferritin family. Oligomer of 24 subunits. There are two types of subunits: L (light) chain and H (heavy) chain. The functional molecule is roughly spherical and contains a central cavity into which the insoluble mineral iron core is deposited.

The protein resides in the cytoplasm. It catalyses the reaction 4 Fe(2+) + O2 + 4 H(+) = 4 Fe(3+) + 2 H2O. Its function is as follows. Stores iron in a soluble, non-toxic, readily available form. Important for iron homeostasis. Has ferroxidase activity. Iron is taken up in the ferrous form and deposited as ferric hydroxides after oxidation. The protein is Ferritin heavy chain B (fth1-b) of Xenopus laevis (African clawed frog).